Reading from the N-terminus, the 203-residue chain is MKDLTDKQQAVLAFITTIIKERGFPPTIREIGDEFGITAKGAYDHLKAIEKKGYLKTAKNQSRAIELIRQSPMESIPVQATSIPVIGRVAAGLPIFADENIESYIPVPDEMAKGNVPMYALRVQGDSMIEVGIDSGDIAIIEKRDIARNGEIVVALIEDEATLKVYYKEQDQIRLEARNPKYKPIKTKKATVIGKLVGLYRIY.

A DNA-binding region (H-T-H motif) is located at residues 28–47 (IREIGDEFGITAKGAYDHLK). Residues S127 and K164 each act as for autocatalytic cleavage activity in the active site.

Belongs to the peptidase S24 family. In terms of assembly, homodimer.

It carries out the reaction Hydrolysis of Ala-|-Gly bond in repressor LexA.. Functionally, represses a number of genes involved in the response to DNA damage (SOS response), including recA and lexA. In the presence of single-stranded DNA, RecA interacts with LexA causing an autocatalytic cleavage which disrupts the DNA-binding part of LexA, leading to derepression of the SOS regulon and eventually DNA repair. In Leptospira borgpetersenii serovar Hardjo-bovis (strain JB197), this protein is LexA repressor.